The primary structure comprises 1072 residues: DNA-directed RNA polymerase subunit beta (1072 aa).

It belongs to the RNA polymerase beta chain family. In terms of assembly, in plastids the minimal PEP RNA polymerase catalytic core is composed of four subunits: alpha, beta, beta', and beta''. When a (nuclear-encoded) sigma factor is associated with the core the holoenzyme is formed, which can initiate transcription.

Its subcellular location is the plastid. It is found in the chloroplast. It carries out the reaction RNA(n) + a ribonucleoside 5'-triphosphate = RNA(n+1) + diphosphate. Its function is as follows. DNA-dependent RNA polymerase catalyzes the transcription of DNA into RNA using the four ribonucleoside triphosphates as substrates. The polypeptide is DNA-directed RNA polymerase subunit beta (Oenothera elata subsp. hookeri (Hooker's evening primrose)).